The sequence spans 202 residues: uncharacterized protein (202 aa).

The 81-residue stretch at 116–196 (LDLHGMTCSE…GKGTTWVLLK (81 aa)) folds into the Smr domain.

This is an uncharacterized protein from Treponema pallidum (strain Nichols).